The primary structure comprises 155 residues: Ribosomal RNA large subunit methyltransferase H (155 aa).

S-adenosyl-L-methionine is bound by residues L72, G104, and 123–128 (LAKITL).

Belongs to the RNA methyltransferase RlmH family. Homodimer.

The protein resides in the cytoplasm. It catalyses the reaction pseudouridine(1915) in 23S rRNA + S-adenosyl-L-methionine = N(3)-methylpseudouridine(1915) in 23S rRNA + S-adenosyl-L-homocysteine + H(+). In terms of biological role, specifically methylates the pseudouridine at position 1915 (m3Psi1915) in 23S rRNA. In Mycoplasma mycoides subsp. mycoides SC (strain CCUG 32753 / NCTC 10114 / PG1), this protein is Ribosomal RNA large subunit methyltransferase H.